The primary structure comprises 651 residues: Intraflagellar transport protein 70A (651 aa).

7 TPR repeats span residues D8–S41, R42–V75, P140–K173, D175–E207, L372–T405, I410–H443, and I445–N478. The stretch at Y494 to N521 forms a coiled coil. A TPR 8 repeat occupies C530–K563.

The protein belongs to the TTC30/dfy-1/fleer family.

Its subcellular location is the cell projection. It is found in the cilium. Its function is as follows. Required for polyglutamylation of axonemal tubulin. Plays a role in anterograde intraflagellar transport (IFT), the process by which cilia precursors are transported from the base of the cilium to the site of their incorporation at the tip. The polypeptide is Intraflagellar transport protein 70A (ift70a) (Xenopus laevis (African clawed frog)).